The sequence spans 257 residues: 5-keto-4-deoxy-D-glucarate aldolase (257 aa).

His-51 acts as the Proton acceptor in catalysis. Gln-152 contacts substrate. Glu-154 lines the Mg(2+) pocket. The substrate site is built by Ser-179 and Asp-180. Residue Asp-180 coordinates Mg(2+).

It belongs to the HpcH/HpaI aldolase family. KDGluc aldolase subfamily. In terms of assembly, homohexamer; trimer of dimers. Mg(2+) is required as a cofactor.

It catalyses the reaction 5-dehydro-4-deoxy-D-glucarate = 2-hydroxy-3-oxopropanoate + pyruvate. The catalysed reaction is 2-dehydro-3-deoxy-D-glucarate = 2-hydroxy-3-oxopropanoate + pyruvate. The protein operates within carbohydrate acid metabolism; galactarate degradation; D-glycerate from galactarate: step 2/3. Catalyzes the reversible retro-aldol cleavage of both 5-keto-4-deoxy-D-glucarate and 2-keto-3-deoxy-D-glucarate to pyruvate and tartronic semialdehyde. The chain is 5-keto-4-deoxy-D-glucarate aldolase from Citrobacter koseri (strain ATCC BAA-895 / CDC 4225-83 / SGSC4696).